The sequence spans 450 residues: Adenylosuccinate lyase (450 aa).

Residues 9 to 10 (RY), 75 to 77 (HHD), and 101 to 102 (TS) each bind N(6)-(1,2-dicarboxyethyl)-AMP. Catalysis depends on H149, which acts as the Proton donor/acceptor. Position 223 (Q223) interacts with N(6)-(1,2-dicarboxyethyl)-AMP. Residue S273 is the Proton donor/acceptor of the active site. Residues S274, 279–281 (KRN), and 318–322 (SVERV) contribute to the N(6)-(1,2-dicarboxyethyl)-AMP site.

Belongs to the lyase 1 family. Adenylosuccinate lyase subfamily. Homotetramer. Residues from neighboring subunits contribute catalytic and substrate-binding residues to each active site.

It carries out the reaction N(6)-(1,2-dicarboxyethyl)-AMP = fumarate + AMP. The enzyme catalyses (2S)-2-[5-amino-1-(5-phospho-beta-D-ribosyl)imidazole-4-carboxamido]succinate = 5-amino-1-(5-phospho-beta-D-ribosyl)imidazole-4-carboxamide + fumarate. It functions in the pathway purine metabolism; AMP biosynthesis via de novo pathway; AMP from IMP: step 2/2. It participates in purine metabolism; IMP biosynthesis via de novo pathway; 5-amino-1-(5-phospho-D-ribosyl)imidazole-4-carboxamide from 5-amino-1-(5-phospho-D-ribosyl)imidazole-4-carboxylate: step 2/2. Its function is as follows. Catalyzes two reactions in de novo purine nucleotide biosynthesis. Catalyzes the breakdown of 5-aminoimidazole- (N-succinylocarboxamide) ribotide (SAICAR or 2-[5-amino-1-(5-phospho-beta-D-ribosyl)imidazole-4-carboxamido]succinate) to 5-aminoimidazole-4-carboxamide ribotide (AICAR or 5-amino-1-(5-phospho-beta-D-ribosyl)imidazole-4-carboxamide) and fumarate, and of adenylosuccinate (ADS or N(6)-(1,2-dicarboxyethyl)-AMP) to adenosine monophosphate (AMP) and fumarate. The sequence is that of Adenylosuccinate lyase (purB) from Pyrococcus abyssi (strain GE5 / Orsay).